We begin with the raw amino-acid sequence, 398 residues long: Elongation factor Tu (398 aa).

The tr-type G domain occupies 10–207; sequence KIHLNVGTIG…ILDKNIPVPN (198 aa). Residues 19–26 are G1; it reads GHVDHGKT. GTP is bound at residue 19-26; the sequence is GHVDHGKT. Mg(2+) is bound at residue threonine 26. Residues 60–64 are G2; that stretch reads GITIS. Residues 81-84 are G3; sequence DCPG. GTP is bound by residues 81-85 and 136-139; these read DCPGH and NKAD. The interval 136–139 is G4; sequence NKAD. Positions 174 to 176 are G5; sequence SAL.

The protein belongs to the TRAFAC class translation factor GTPase superfamily. Classic translation factor GTPase family. EF-Tu/EF-1A subfamily. In terms of assembly, monomer.

Its subcellular location is the cytoplasm. It catalyses the reaction GTP + H2O = GDP + phosphate + H(+). Functionally, GTP hydrolase that promotes the GTP-dependent binding of aminoacyl-tRNA to the A-site of ribosomes during protein biosynthesis. The sequence is that of Elongation factor Tu from Carsonella ruddii (strain PV).